Reading from the N-terminus, the 959-residue chain is DEAD-box ATP-dependent RNA helicase rde-12 (959 aa).

The segment at 1–336 (MSSFGNNAGG…EGVNAPVRAP (336 aa)) is disordered. Over residues 71 to 97 (GRREDDRSHSRDNHGGSRYGERDDRGN) the composition is skewed to basic and acidic residues. The segment covering 98–118 (NGRSADNRYSQSNYNYDSNRG) has biased composition (polar residues). A compositionally biased stretch (basic and acidic residues) spans 122-134 (YQRDNHGSKDDRG). Over residues 137 to 160 (NQYNDHGSNHNSNSRNDQYRQGSY) the composition is skewed to polar residues. Basic and acidic residues-rich tracts occupy residues 166–181 (SGYR…DNDQ) and 189–201 (RDSD…DHHN). The span at 202–213 (YNSQSSPRSHQG) shows a compositional bias: polar residues. Composition is skewed to basic and acidic residues over residues 219–239 (SAPK…HDSY) and 255–270 (YRND…DHRS). Positions 271-280 (GGNNSSSGFK) are enriched in low complexity. Residues 281-301 (NDGGFGGNDNRGFGNNGGGSF) show a composition bias toward gly residues. Low complexity predominate over residues 302–317 (GNPNNSYRGNSNNIGG). Residues 380 to 408 (TSWTNSGLHPTILETLKRIKYNNVRTIQG) carry the Q motif motif. Positions 411–599 (IPQVLDGHDV…NELMKRLPGQ (189 aa)) constitute a Helicase ATP-binding domain. Residue 424 to 431 (AETSAGKT) participates in ATP binding. Positions 539–542 (DEAD) match the DEAD box motif. One can recognise a Helicase C-terminal domain in the interval 632–792 (KLREILKQNV…KVPDFLDAMA (161 aa)). Disordered regions lie at residues 793-834 (KSSR…GGGR) and 858-959 (GGGG…DDEW). 2 stretches are compositionally biased toward gly residues: residues 800–834 (GTSG…GGGR) and 858–872 (GGGG…GFGG). The segment covering 930–941 (TLGSSTFGTANN) has biased composition (polar residues). A compositionally biased stretch (acidic residues) spans 942 to 959 (ADEEPTETGADGNDDDEW).

This sequence belongs to the DEAD box helicase family. DDX3/DED1 subfamily. Interacts with wago-1, ergo-1 and rde-1. Requires Mg(2+) as cofactor. As to expression, expressed in the soma and germline.

Its subcellular location is the cytoplasm. The protein localises to the perinuclear region. It localises to the cytoplasmic granule. The protein resides in the P-body. The enzyme catalyses ATP + H2O = ADP + phosphate + H(+). Its function is as follows. Probable ATP-dependent RNA helicase involved in RNAi-mediated gene silencing. Specifically required in the endogenous siRNA pathway for biogenesis of secondary endogenous small interfering RNA (siRNA) intermediates called 22G-RNAs. May associate with and recruit rde-10 to primary siRNA-targeted mRNA for secondary siRNA synthesis. May be recruited to target mRNAs by rde-1 and/or ergo-1. In Caenorhabditis elegans, this protein is DEAD-box ATP-dependent RNA helicase rde-12.